The following is a 152-amino-acid chain: UPF0179 protein Mlab_1307 (152 aa).

The protein belongs to the UPF0179 family.

In Methanocorpusculum labreanum (strain ATCC 43576 / DSM 4855 / Z), this protein is UPF0179 protein Mlab_1307.